A 167-amino-acid chain; its full sequence is Peptidyl-prolyl cis-trans isomerase-like 3 (167 aa).

Residues 1-160 (MSVTLHTTLG…EEVRIERVTV (160 aa)) form the PPIase cyclophilin-type domain.

Belongs to the cyclophilin-type PPIase family. PPIL3 subfamily.

The enzyme catalyses [protein]-peptidylproline (omega=180) = [protein]-peptidylproline (omega=0). In terms of biological role, PPIases accelerate the folding of proteins. It catalyzes the cis-trans isomerization of proline imidic peptide bonds in oligopeptides. In Neurospora crassa (strain ATCC 24698 / 74-OR23-1A / CBS 708.71 / DSM 1257 / FGSC 987), this protein is Peptidyl-prolyl cis-trans isomerase-like 3 (cyp-10).